A 399-amino-acid polypeptide reads, in one-letter code: Homoserine O-acetyltransferase (399 aa).

The 310-residue stretch at 63-372 (NAILVCHALT…TDRGHDAFLL (310 aa)) folds into the AB hydrolase-1 domain. Ser-168 serves as the catalytic Nucleophile. A substrate-binding site is contributed by Arg-238. Catalysis depends on residues Asp-334 and His-367. Asp-368 provides a ligand contact to substrate.

Belongs to the AB hydrolase superfamily. MetX family. As to quaternary structure, homodimer.

Its subcellular location is the cytoplasm. It carries out the reaction L-homoserine + acetyl-CoA = O-acetyl-L-homoserine + CoA. Its pathway is amino-acid biosynthesis; L-methionine biosynthesis via de novo pathway; O-acetyl-L-homoserine from L-homoserine: step 1/1. Transfers an acetyl group from acetyl-CoA to L-homoserine, forming acetyl-L-homoserine. In Nitrobacter hamburgensis (strain DSM 10229 / NCIMB 13809 / X14), this protein is Homoserine O-acetyltransferase.